The following is a 203-amino-acid chain: B-cell CLL/lymphoma 7 protein family member B-A (203 aa).

Disordered regions lie at residues 55–80 and 94–148; these read KEKE…ESSD and SNQS…EIME. Over residues 109-129 the composition is skewed to low complexity; the sequence is ADSSNNSSPPASEPVSPAPQS.

The protein belongs to the BCL7 family.

The polypeptide is B-cell CLL/lymphoma 7 protein family member B-A (bcl7ba) (Danio rerio (Zebrafish)).